The following is a 173-amino-acid chain: Bifunctional protein PyrR (173 aa).

A PRPP-binding motif is present at residues 94 to 106 (VILIDDVLYTGRT).

This sequence belongs to the purine/pyrimidine phosphoribosyltransferase family. PyrR subfamily. Homodimer and homohexamer; in equilibrium.

The catalysed reaction is UMP + diphosphate = 5-phospho-alpha-D-ribose 1-diphosphate + uracil. Regulates transcriptional attenuation of the pyrimidine nucleotide (pyr) operon by binding in a uridine-dependent manner to specific sites on pyr mRNA. This disrupts an antiterminator hairpin in the RNA and favors formation of a downstream transcription terminator, leading to a reduced expression of downstream genes. In terms of biological role, also displays a weak uracil phosphoribosyltransferase activity which is not physiologically significant. The chain is Bifunctional protein PyrR from Streptococcus gordonii (strain Challis / ATCC 35105 / BCRC 15272 / CH1 / DL1 / V288).